The primary structure comprises 115 residues: NADH-ubiquinone oxidoreductase chain 3 (115 aa).

3 helical membrane-spanning segments follow: residues 3–23 (LIMV…VAFW), 55–75 (FFLV…LLPI), and 84–104 (INTM…GLAY).

Belongs to the complex I subunit 3 family. Core subunit of respiratory chain NADH dehydrogenase (Complex I) which is composed of 45 different subunits. Interacts with TMEM186. Interacts with TMEM242.

It localises to the mitochondrion inner membrane. It catalyses the reaction a ubiquinone + NADH + 5 H(+)(in) = a ubiquinol + NAD(+) + 4 H(+)(out). Functionally, core subunit of the mitochondrial membrane respiratory chain NADH dehydrogenase (Complex I) which catalyzes electron transfer from NADH through the respiratory chain, using ubiquinone as an electron acceptor. Essential for the catalytic activity of complex I. The chain is NADH-ubiquinone oxidoreductase chain 3 from Scotinomys teguina (Alston's brown mouse).